The following is a 319-amino-acid chain: Lambda-crystallin (319 aa).

The residue at position 2 (A2) is an N-acetylalanine. S3 is subject to Phosphoserine. NAD(+) is bound by residues 16 to 17 (LV), D36, E97, and K102. Position 111 is a phosphoserine (S111).

The protein belongs to the 3-hydroxyacyl-CoA dehydrogenase family. Homodimer. In terms of tissue distribution, detected in eye lens, kidney, liver, heart, lung, brain and testis.

It localises to the cytoplasm. It carries out the reaction L-gulonate + NAD(+) = 3-dehydro-L-gulonate + NADH + H(+). With respect to regulation, inhibited by malonate and by inorganic phosphate. Functions as a crystallin in the rabbit eye lens. Has high L-gulonate 3-dehydrogenase activity. It also exhibits low dehydrogenase activity toward L-3-hydroxybutyrate (HBA) and L-threonate. The polypeptide is Lambda-crystallin (CRYL1) (Oryctolagus cuniculus (Rabbit)).